A 165-amino-acid chain; its full sequence is Transcriptional regulator MraZ (165 aa).

2 consecutive SpoVT-AbrB domains span residues 5 to 51 and 80 to 123; these read TYEG…GEEL and SAEL…NPER.

Belongs to the MraZ family. As to quaternary structure, forms oligomers.

The protein resides in the cytoplasm. The protein localises to the nucleoid. The protein is Transcriptional regulator MraZ of Hyphomonas neptunium (strain ATCC 15444).